The primary structure comprises 442 residues: Transducin beta-like protein 2 (442 aa).

Residues 36 to 71 (EKPSQPVCQKENEPKKSGSKKQKQNQRVRKEKPQQH) are disordered. The span at 52-65 (SGSKKQKQNQRVRK) shows a compositional bias: basic residues. 7 WD repeats span residues 84-123 (SHSG…QREH), 130-170 (VELD…DGGF), 182-222 (KHKA…STIN), 224-263 (NQMN…GEFQ), 273-312 (GHSA…KKQQ), 323-362 (EEAS…KEEY), and 366-404 (VHGE…RAVV). Lys164 participates in a covalent cross-link: Glycyl lysine isopeptide (Lys-Gly) (interchain with G-Cter in SUMO2). Position 428 is a phosphothreonine (Thr428).

This chain is Transducin beta-like protein 2 (Tbl2), found in Mus musculus (Mouse).